A 370-amino-acid polypeptide reads, in one-letter code: 3-dehydroquinate synthase (370 aa).

Residues 112-116 (GVVGD), 136-137 (TS), Lys149, Lys158, and 176-179 (TLRT) each bind NAD(+). Positions 191, 254, and 276 each coordinate Zn(2+).

The protein belongs to the sugar phosphate cyclases superfamily. Dehydroquinate synthase family. Requires Co(2+) as cofactor. The cofactor is Zn(2+). NAD(+) is required as a cofactor.

It localises to the cytoplasm. It catalyses the reaction 7-phospho-2-dehydro-3-deoxy-D-arabino-heptonate = 3-dehydroquinate + phosphate. Its pathway is metabolic intermediate biosynthesis; chorismate biosynthesis; chorismate from D-erythrose 4-phosphate and phosphoenolpyruvate: step 2/7. Catalyzes the conversion of 3-deoxy-D-arabino-heptulosonate 7-phosphate (DAHP) to dehydroquinate (DHQ). This chain is 3-dehydroquinate synthase, found in Xanthomonas campestris pv. campestris (strain 8004).